The sequence spans 80 residues: Defensin-like protein 46 (80 aa).

The signal sequence occupies residues 1–27 (MGSTKTLVTCFLTIILAVSLSNHNVLA). Disulfide bonds link C40/C78, C44/C65, C50/C76, and C54/C77.

Belongs to the DEFL family.

It is found in the secreted. This Arabidopsis thaliana (Mouse-ear cress) protein is Defensin-like protein 46.